The following is a 302-amino-acid chain: Actin maturation protease (302 aa).

Positions 1–26 (MPHTNEDPTAQQAGVILDPPPPLPPP) are disordered. The segment at 85-205 (SLIQEGPQCG…WAVISGVLFG (121 aa)) is peptidase C39-like. Residue Cys93 is part of the active site.

It belongs to the ACTMAP family.

The protein localises to the cytoplasm. It carries out the reaction N-terminal N(alpha)-acetyl-L-methionyl-L-aspartyl-[protein] + H2O = N-terminal L-aspartyl-[protein] + N-acetyl-L-methionine. It catalyses the reaction N-terminal N(alpha)-acetyl-L-methionyl-L-glutamyl-[protein] + H2O = N-terminal L-glutamyl-[protein] + N-acetyl-L-methionine. The enzyme catalyses N-terminal N(alpha)-acetyl-L-cysteinyl-L-aspartyl-[protein] + H2O = N-terminal L-aspartyl-[protein] + N-acetyl-L-cysteine. The catalysed reaction is N-terminal N(alpha)-acetyl-L-cysteinyl-L-glutamyl-[protein] + H2O = N-terminal L-glutamyl-[protein] + N-acetyl-L-cysteine. Functionally, actin maturation protease that specifically mediates the cleavage of immature acetylated N-terminal actin, thereby contributing to actin maturation. Cleaves N-terminal acetylated methionine of immature cytoplasmic beta- and gamma-actin after translation. Cleaves N-terminal acetylated cysteine of muscle alpha-actin after canonical removal of N-terminal methionine. The sequence is that of Actin maturation protease from Xenopus tropicalis (Western clawed frog).